The following is a 161-amino-acid chain: Tropomyosin-2 (161 aa).

Positions 1–161 (MEKIKEKLNS…DEIANSLENL (161 aa)) form a coiled coil. Positions 32–43 (LEQSNTEKENEI) are enriched in basic and acidic residues. The tract at residues 32–97 (LEQSNTEKEN…NQDLEQQLED (66 aa)) is disordered. Ser-55 is modified (phosphoserine). Over residues 62-83 (SQLSDTKQLAEDSNNLRSNNEN) the composition is skewed to polar residues. 2 positions are modified to phosphoserine: Ser-116 and Ser-157.

As to quaternary structure, homodimer.

It localises to the cytoplasm. It is found in the cytoskeleton. Functionally, involved in cell morphogenesis. Binds to F-actin and stabilizes the actin filaments. This chain is Tropomyosin-2 (TPM2), found in Saccharomyces cerevisiae (strain ATCC 204508 / S288c) (Baker's yeast).